Consider the following 185-residue polypeptide: Small ribosomal subunit protein uS4c (185 aa).

The 63-residue stretch at 72 to 134 (MRLDNVIFRL…PTSCNALKGE (63 aa)) folds into the S4 RNA-binding domain. Residues 132 to 154 (KGESPGGGETPDHLTASLSEGSR) are disordered.

The protein belongs to the universal ribosomal protein uS4 family. As to quaternary structure, part of the 30S ribosomal subunit. Contacts protein S5. The interaction surface between S4 and S5 is involved in control of translational fidelity.

It localises to the plastid. It is found in the chloroplast. One of the primary rRNA binding proteins, it binds directly to 16S rRNA where it nucleates assembly of the body of the 30S subunit. Its function is as follows. With S5 and S12 plays an important role in translational accuracy. The sequence is that of Small ribosomal subunit protein uS4c (rps4) from Woodwardia unigemmata (Chainfern).